We begin with the raw amino-acid sequence, 95 residues long: Auxin-responsive protein SAUR27 (95 aa).

The protein belongs to the ARG7 family. As to quaternary structure, interacts with PP2C-D1. In terms of tissue distribution, higher expression in thermo-responsive cultivars (e.g. cv. Alst-1, cv. Ang-0 and cv. Com-0) than in low thermo-responsive cultivars (e.g. cv. Dja-1, cv. El-0 and cv. Kon).

The protein resides in the cell membrane. Functions as a positive effector of cell expansion through modulation of auxin transport. Involved in thermo-responsiveness of plant architecture. Enhances plasma membrane H(+)-ATPase. The polypeptide is Auxin-responsive protein SAUR27 (Arabidopsis thaliana (Mouse-ear cress)).